A 370-amino-acid chain; its full sequence is Gap junction delta-4 protein (370 aa).

Residues 1 to 19 are Cytoplasmic-facing; sequence MEGVDLLGFLIITLNCNVT. The helical transmembrane segment at 20 to 40 threads the bilayer; the sequence is MXGKLWFVLTMLLRMLVIVLA. Over 41 to 76 the chain is Extracellular; it reads GRPVYQDEQERFVCNTLQPGCANVCYDVFSPVSHLR. A helical membrane pass occupies residues 77–97; that stretch reads FWLIQGVCVLLPSAVFSVYVL. Residues 98 to 146 lie on the Cytoplasmic side of the membrane; sequence HRGATLAALGPRRCPEPRDTASGQRRCPGSCRERGGLEVPDFSAGYIIH. Residues 147 to 167 form a helical membrane-spanning segment; sequence LLLRTLLEAAFGALNYLLFGF. The Extracellular portion of the chain corresponds to 168-196; that stretch reads LAPNKFPCTRPPCTGVVDCYVSRPTEKSL. Residues 197–217 form a helical membrane-spanning segment; the sequence is LMLFLWAVSALSFLLGLADLV. Over 218–370 the chain is Cytoplasmic; sequence CSLRRLMRRR…HLRARKSEWV (153 aa). Residues 227–370 form a disordered region; that stretch reads RPGPPTSPSI…HLRARKSEWV (144 aa). The span at 246–260 shows a compositional bias: basic and acidic residues; it reads PEGRPTDKEGGREQE. Over residues 331–345 the composition is skewed to low complexity; that stretch reads PSAAPSHLAAHPSCS.

This sequence belongs to the connexin family. Delta-type subfamily. As to quaternary structure, a connexon is composed of a hexamer of connexins.

The protein resides in the cell membrane. It is found in the cell junction. It localises to the gap junction. Functionally, one gap junction consists of a cluster of closely packed pairs of transmembrane channels, the connexons, through which materials of low MW diffuse from one cell to a neighboring cell. This is Gap junction delta-4 protein (GJD4) from Macaca fascicularis (Crab-eating macaque).